The sequence spans 651 residues: MADSAELKQMVMSLRVSELQVLLGYAGRNKHGRKHELLTKALHLLKAGCSPAVQMKIKELYRRRFPQKIMTPADLSIPNVHSSPMPPTLSPSTIPQLTYDGHPASSPLLPVSLLGPKHELELPHLTSALHPVHPDIKLQKLPFYDLLDELIKPTSLASDNSQRFRETCFAFALTPQQVQQISSSMDISGTKCDFTVQVQLRFCLSETSCPQEDHFPPNLCVKVNTKPCSLPGYLPPTKNGVEPKRPSRPINITSLVRLSTTVPNTIVVSWTAEIGRTYSMAVYLVKQLSSTVLLQRLRAKGIRNPDHSRALIKEKLTADPDSEIATTSLRVSLLCPLGKMRLTIPCRALTCSHLQCFDATLYIQMNEKKPTWVCPVCDKKAPYEHLIIDGLFMEILKYCTDCDEIQFKEDGSWAPMRSKKEVQEVTASYNGVDGCLSSTLEHQVASHNQSSNKNKKVEVIDLTIDSSSDEEEEEPPAKRTCPSLSPTSPLSNKGILSLPHQASPVSRTPSLPAVDTSYINTSLIQDYRHPFHMTPMPYDLQGLDFFPFLSGDNQHYNTSLLAAAAAAVSDDQDLLHSSRFFPYTSSQMFLDQLSAGGSTSLPATNGSSSGSNSSLVSSNSLRESHGHGVASRSSADTASIFGIIPDIISLD.

Position 2 is an N-acetylalanine (Ala2). Positions Ala2–Leu200 are required for interaction with MSX1. Residues Val11 to Leu45 form the SAP domain. The LXXLL motif signature appears at Leu19–Leu23. Glycyl lysine isopeptide (Lys-Gly) (interchain with G-Cter in SUMO2) cross-links involve residues Lys40 and Lys46. Residues Lys56 to Arg64 carry the Nuclear localization signal motif. Residues His124–Leu288 enclose the PINIT domain. Residues Lys137 and Lys238 each participate in a glycyl lysine isopeptide (Lys-Gly) (interchain with G-Cter in SUMO2) cross-link. The segment at Pro320–Ile405 adopts an SP-RING-type zinc-finger fold. Residues Cys351, His353, Cys374, and Cys377 each contribute to the Zn(2+) site. The Nuclear localization signal motif lies at Lys368–Lys380. A Glycyl lysine isopeptide (Lys-Gly) (interchain with G-Cter in SUMO2) cross-link involves residue Lys453. Positions Leu462 to Glu473 are SUMO1-binding. The disordered stretch occupies residues Asp465–Leu511. Ser467, Ser468, Ser483, and Ser485 each carry phosphoserine. The segment covering Pro482–Ser491 has biased composition (low complexity). At Thr487 the chain carries Phosphothreonine. A phosphoserine mark is found at Ser488 and Ser491. Lys493 participates in a covalent cross-link: Glycyl lysine isopeptide (Lys-Gly) (interchain with G-Cter in SUMO2). Phosphoserine is present on residues Ser503, Ser510, and Ser522. Repeat copies occupy residues Asn520 to Leu523 and Asn557 to Leu560. Residues Asn520 to Leu615 form a 4 X 4 AA repeats of N-T-S-L region. The stretch at Ser598–Leu601 is one 3; approximate repeat. The tract at residues Ser600–Ala630 is disordered. Residues Asn605–Leu621 show a composition bias toward low complexity. A 4; approximate repeat occupies Asn612–Leu615.

It belongs to the PIAS family. As to quaternary structure, interacts with NR2C1; the interaction promotes its sumoylation. Interacts with DDX21, CSRP2, AXIN1, JUN, SATB2, PLAG1, TP53 and STAT1 (dimer), following IFNA1-stimulation. Interacts with SP3 (preferentially when SUMO-modified). Interacts with KLF8; the interaction results in SUMO ligation and repression of KLF8 transcriptional activity and of its cell cycle progression into G(1) phase. Interacts with CHUK/IKKA; this interaction induces PIAS1 phosphorylation. Interacts with PTK2/FAK1; the interaction promotes its sumoylation. Interacts with SUMO1, UBE2I, NCOA2 and AR. Interacts with NR2C1; the interaction promotes its sumoylation. Interacts with DDX5. Interacts with MTA1. Interacts with PML (isoform PML-12). Interacts with PRDM1. Interacts (via N-terminus) with MSX1 (via C-terminus); the interaction is required for the localization of both proteins to the nuclear periphery and specific binding of MSX1 to the core enhancer region in target gene promoters. In terms of processing, sumoylated. In terms of tissue distribution, expressed in kidney, heart, spleen, brain and cerebellum; weak expression, if any, in liver and lung.

The protein resides in the nucleus. It is found in the nucleus speckle. It localises to the PML body. Its subcellular location is the cytoplasm. The protein localises to the cytoskeleton. The enzyme catalyses S-ubiquitinyl-[E2 ubiquitin-conjugating enzyme]-L-cysteine + [acceptor protein]-L-lysine = [E2 ubiquitin-conjugating enzyme]-L-cysteine + N(6)-ubiquitinyl-[acceptor protein]-L-lysine.. It functions in the pathway protein modification; protein sumoylation. In terms of biological role, functions as an E3-type small ubiquitin-like modifier (SUMO) ligase, stabilizing the interaction between UBE2I and the substrate, and as a SUMO-tethering factor. Catalyzes sumoylation of various proteins, such as CEBPB, MRE11, MTA1, PTK2 and PML. Plays a crucial role as a transcriptional coregulation in various cellular pathways, including the STAT pathway, the p53 pathway and the steroid hormone signaling pathway. In vitro, binds A/T-rich DNA. The effects of this transcriptional coregulation, transactivation or silencing, may vary depending upon the biological context. Mediates sumoylation of MRE11, stabilizing MRE11 on chromatin during end resection. Sumoylates PML (at 'Lys-65' and 'Lys-160') and PML-RAR and promotes their ubiquitin-mediated degradation. PIAS1-mediated sumoylation of PML promotes its interaction with CSNK2A1/CK2 which in turn promotes PML phosphorylation and degradation. Enhances the sumoylation of MTA1 and may participate in its paralog-selective sumoylation. Plays a dynamic role in adipogenesis by promoting the SUMOylation and degradation of CEBPB. Mediates the nuclear mobility and localization of MSX1 to the nuclear periphery, whereby MSX1 is brought into the proximity of target myoblast differentiation factor genes. Also required for the binding of MSX1 to the core enhancer region in target gene promoter regions, independent of its sumoylation activity. Capable of binding to the core enhancer region TAAT box in the MYOD1 gene promoter. This chain is E3 SUMO-protein ligase PIAS1 (Pias1), found in Mus musculus (Mouse).